A 617-amino-acid polypeptide reads, in one-letter code: MSPQRDRINAFYKDNPHPKGSRIVINREHLMIDRPYVLLAVLFVMFLSLIGLLAIAGIRLHRAAIYTAEIHKSLSTNLDVTNSIEHQVKDVLTPLFKIIGDEVGLRTPQRFTDLVKFISDKIKFLNPDREYDFRDLTWCINPPERIKLDYDQYCADVAAEELMNALVNSTLLEARATNQFLAVSKGNCSGPTTIRGQFSNMSLSLLDLYLSRGYNVSSIVTMTSQGMYGGTYLVGKPNLSSKGSELSQLSMHRVFEVGVIRNPGLGAPVFHMTNYFEQPVSNDFSNCMVALGELKFAALCHREDSITIPYQGSGKGVSFQLVKLGVWKSPTDMRSWVPLSTDDPVIDRLYLSSHRGVIADNQAKWAVPTTRTDDKLRMETCFQQACKGKNQALCENPEWAPLKDNRIPSYGVLSVNLSLTVELKIKIASGFGPLITHGSGMDLYKTNHNNVYWLTIPPMKNLALGVINTLEWIPRFKVSPNLFTVPIKEAGEDCHAPTYLPAEVDGDVKLSSNLVILPGQDLQYVLATYDTSRVEHAVVYYVYSPSRSFSYFYPFRLPIKGVPIELQVECFTWDKKLWCRHFCVLADSESGGHITHSGMVGMGVSCTVTREDGTNRR.

Topologically, residues 1-37 (MSPQRDRINAFYKDNPHPKGSRIVINREHLMIDRPYV) are intravirion. Residues 1–154 (MSPQRDRINA…RIKLDYDQYC (154 aa)) form a stalk region. The chain crosses the membrane as a helical span at residues 38-58 (LLAVLFVMFLSLIGLLAIAGI). Topologically, residues 59 to 617 (RLHRAAIYTA…VTREDGTNRR (559 aa)) are virion surface. N-linked (GlcNAc...) asparagine; by host glycosylation is present at N168. Positions 171–175 (LLEAR) are involved in cell-to-cell fusion dependent on CADM1, CADM2, and NECTIN4. N-linked (GlcNAc...) asparagine; by host glycans are attached at residues N187, N200, N215, and N238. Disulfide bonds link C188/C606, C287/C300, C381/C494, C386/C394, and C570/C579. An N-linked (GlcNAc...) asparagine; by host glycan is attached at N416. An interaction with host NECTIN4 receptor region spans residues 458-543 (PMKNLALGVI…VEHAVVYYVY (86 aa)).

Belongs to the paramyxoviruses hemagglutinin-neuraminidase family. Non-sialidase subfamily. In terms of assembly, homodimer; disulfide-linked. Further forms homotetramer (dimer of dimers). Interacts (via C-terminus) with human NECTIN4 (via N-terminus); this interaction allows attachment to the respiratory epithelium and viral entry. Interacts (via C-terminus) with human SLAMF1/CD150 (via N-terminus); this interaction allows attachment and viral entry into the CD150-expressing immune cells.

The protein localises to the virion membrane. The protein resides in the host cell membrane. Attaches the virus to the human SLAMF1/CD150 receptor for entry into host dendritic cells, macrophages, activated memory T cells and naive or memory B cells, thereby explaining the long immunosuppression that follows infection. In the respiratory airways, binds to the NECTIN4 receptor for entry into the host cell. During viral entry or virus-mediated fusion between infected cells and neighboring susceptible cells, the head domain of the H protein initially binds to its receptor and then the stalk region of the H protein transmits the fusion-triggering signal to the F protein. Unilateral receptor binding to only one of the covalently linked dimer pairs in the H tetramer is sufficient for F triggering. In case of neuropathogenic strains, host CADM1 (isoform 5) and CADM2 (isoform 5) can interact with measles hemagglutinin to trigger hyperfusogenic F-mediated membrane fusion and presumably transsynaptic cell-to-cell transmission of the virus. In Homo sapiens (Human), this protein is Hemagglutinin glycoprotein (H).